A 271-amino-acid polypeptide reads, in one-letter code: Orotidine 5'-phosphate decarboxylase (271 aa).

Lys97 serves as the catalytic Proton donor.

Belongs to the OMP decarboxylase family. Type 2 subfamily.

The enzyme catalyses orotidine 5'-phosphate + H(+) = UMP + CO2. Its pathway is pyrimidine metabolism; UMP biosynthesis via de novo pathway; UMP from orotate: step 2/2. This chain is Orotidine 5'-phosphate decarboxylase, found in Leptospira borgpetersenii serovar Hardjo-bovis (strain L550).